We begin with the raw amino-acid sequence, 345 residues long: Platelet-derived growth factor C (345 aa).

The N-terminal stretch at 1–22 (MSLFGLLLLTSALAGQRQGTQA) is a signal peptide. Residues asparagine 25 and asparagine 55 are each glycosylated (N-linked (GlcNAc...) asparagine). Residues 46–163 (HERIITVSTN…PGFCIHYNIV (118 aa)) form the CUB domain. Cystine bridges form between cysteine 104-cysteine 124, cysteine 250-cysteine 294, cysteine 280-cysteine 335, and cysteine 287-cysteine 337.

It belongs to the PDGF/VEGF growth factor family. In terms of assembly, homodimer; disulfide-linked. Interacts with PDGFRA homodimers, and with heterodimers formed by PDGFRA and PDGFRB. Interacts (via CUB domain) with PLAT (via kringle domain). Proteolytic removal of the N-terminal CUB domain releasing the core domain is necessary for unmasking the receptor-binding epitopes of the core domain. Cleavage after basic residues in the hinge region (region connecting the CUB and growth factor domains) gives rise to the receptor-binding form. Cleaved by PLAT and PLG. In terms of processing, sumoylated with SUMO1. Post-translationally, N-glycosylated. In terms of tissue distribution, expressed in the fallopian tube, vascular smooth muscle cells in kidney, breast and colon and in visceral smooth muscle of the gastrointestinal tract. Highly expressed in retinal pigment epithelia. Expressed in medulloblastoma. In the kidney, constitutively expressed in parietal epithelial cells of Bowman's capsule, tubular epithelial cells and in arterial endothelial cells (at protein level). Highly expressed in the platelets, prostate, testis and uterus. Higher expression is observed in uterine leiomyomata. Weaker expression in the spleen, thymus, heart, pancreas, liver, ovary cells and small intestine, and negligible expression in the colon and peripheral blood leukocytes.

The protein resides in the cytoplasm. It is found in the cytosol. It localises to the secreted. The protein localises to the nucleus. Its subcellular location is the cytoplasmic granule. The protein resides in the cell membrane. Its function is as follows. Growth factor that plays an essential role in the regulation of embryonic development, cell proliferation, cell migration, survival and chemotaxis. Potent mitogen and chemoattractant for cells of mesenchymal origin. Required for normal skeleton formation during embryonic development, especially for normal development of the craniofacial skeleton and for normal development of the palate. Required for normal skin morphogenesis during embryonic development. Plays an important role in wound healing, where it appears to be involved in three stages: inflammation, proliferation and remodeling. Plays an important role in angiogenesis and blood vessel development. Involved in fibrotic processes, in which transformation of interstitial fibroblasts into myofibroblasts plus collagen deposition occurs. The CUB domain has mitogenic activity in coronary artery smooth muscle cells, suggesting a role beyond the maintenance of the latency of the PDGF domain. In the nucleus, PDGFC seems to have additional function. This is Platelet-derived growth factor C (PDGFC) from Homo sapiens (Human).